We begin with the raw amino-acid sequence, 306 residues long: Elongation factor Ts (306 aa).

The tract at residues 80-83 (TDFV) is involved in Mg(2+) ion dislocation from EF-Tu.

The protein belongs to the EF-Ts family.

It localises to the cytoplasm. Associates with the EF-Tu.GDP complex and induces the exchange of GDP to GTP. It remains bound to the aminoacyl-tRNA.EF-Tu.GTP complex up to the GTP hydrolysis stage on the ribosome. In Methylorubrum populi (strain ATCC BAA-705 / NCIMB 13946 / BJ001) (Methylobacterium populi), this protein is Elongation factor Ts.